Here is a 136-residue protein sequence, read N- to C-terminus: Biopolymer transport protein exbD2 (136 aa).

Topologically, residues 1 to 23 (MAFSTGGNRGPMADINVTPLVDV) are cytoplasmic. The chain crosses the membrane as a helical span at residues 24 to 44 (MLVLLIIFIVTAPIMTYPIAV). Residues 45-136 (DLPQRVLNPP…SQMKKIGFMQ (92 aa)) are Periplasmic-facing.

It belongs to the ExbD/TolR family. In terms of assembly, the accessory proteins ExbB and ExbD seem to form a complex with TonB.

The protein resides in the cell inner membrane. Functionally, involved in the TonB-dependent energy-dependent transport of various receptor-bound substrates. This Xanthomonas campestris pv. campestris (strain ATCC 33913 / DSM 3586 / NCPPB 528 / LMG 568 / P 25) protein is Biopolymer transport protein exbD2 (exbD2).